The sequence spans 252 residues: Imidazole glycerol phosphate synthase subunit HisF (252 aa).

Residues Asp-11 and Asp-130 contribute to the active site.

The protein belongs to the HisA/HisF family. In terms of assembly, heterodimer of HisH and HisF.

The protein localises to the cytoplasm. The enzyme catalyses 5-[(5-phospho-1-deoxy-D-ribulos-1-ylimino)methylamino]-1-(5-phospho-beta-D-ribosyl)imidazole-4-carboxamide + L-glutamine = D-erythro-1-(imidazol-4-yl)glycerol 3-phosphate + 5-amino-1-(5-phospho-beta-D-ribosyl)imidazole-4-carboxamide + L-glutamate + H(+). It participates in amino-acid biosynthesis; L-histidine biosynthesis; L-histidine from 5-phospho-alpha-D-ribose 1-diphosphate: step 5/9. Its function is as follows. IGPS catalyzes the conversion of PRFAR and glutamine to IGP, AICAR and glutamate. The HisF subunit catalyzes the cyclization activity that produces IGP and AICAR from PRFAR using the ammonia provided by the HisH subunit. The chain is Imidazole glycerol phosphate synthase subunit HisF from Bacillus cytotoxicus (strain DSM 22905 / CIP 110041 / 391-98 / NVH 391-98).